The primary structure comprises 539 residues: Squalene monooxygenase SE1 (539 aa).

The next 2 membrane-spanning stretches (helical) occupy residues 22–42 and 71–91; these read LLID…FLLL and IAGS…ALAY. FAD is bound by residues 84-85, 104-105, Arg-112, Arg-183, Val-199, Asp-361, and Met-374; these read VA and ER. The helical transmembrane segment at 472–492 threads the bilayer; that stretch reads LFLHFFAVAIYGVGRLLIPFP.

It belongs to the squalene monooxygenase family. The cofactor is FAD. Mostly expressed in flower buds and leaves, and, to a lower extent, at high levels thought, in roots and petioles. In petioles, preferentially observed in vascular bundle tissue (phloem cells and parenchymatous cells near xylem) and resin ducts.

The protein resides in the microsome membrane. It is found in the endoplasmic reticulum membrane. It carries out the reaction squalene + reduced [NADPH--hemoprotein reductase] + O2 = (S)-2,3-epoxysqualene + oxidized [NADPH--hemoprotein reductase] + H2O + H(+). The protein operates within terpene metabolism; lanosterol biosynthesis; lanosterol from farnesyl diphosphate: step 2/3. In terms of biological role, component of the triterpene saponins (e.g. ginsenosides or panaxosides) and phytosterols biosynthetic pathways. Catalyzes the first oxygenation step in sterol biosynthesis and is suggested to be one of the rate-limiting enzymes in this pathway. This is Squalene monooxygenase SE1 from Panax ginseng (Korean ginseng).